The primary structure comprises 261 residues: uncharacterized protein (261 aa).

Positions 1-22 (MRYLKKVTIYISLLILTIFIGG) are cleaved as a signal peptide. C23 is lipidated: N-palmitoyl cysteine. C23 carries the S-diacylglycerol cysteine lipid modification.

Belongs to the staphylococcal tandem lipoprotein family.

The protein resides in the cell membrane. This is an uncharacterized protein from Staphylococcus epidermidis (strain ATCC 35984 / DSM 28319 / BCRC 17069 / CCUG 31568 / BM 3577 / RP62A).